The sequence spans 274 residues: 2-succinyl-6-hydroxy-2,4-cyclohexadiene-1-carboxylate synthase (274 aa).

The protein belongs to the AB hydrolase superfamily. MenH family. As to quaternary structure, monomer.

The catalysed reaction is 5-enolpyruvoyl-6-hydroxy-2-succinyl-cyclohex-3-ene-1-carboxylate = (1R,6R)-6-hydroxy-2-succinyl-cyclohexa-2,4-diene-1-carboxylate + pyruvate. It functions in the pathway quinol/quinone metabolism; 1,4-dihydroxy-2-naphthoate biosynthesis; 1,4-dihydroxy-2-naphthoate from chorismate: step 3/7. Its pathway is quinol/quinone metabolism; menaquinone biosynthesis. Functionally, catalyzes a proton abstraction reaction that results in 2,5-elimination of pyruvate from 2-succinyl-5-enolpyruvyl-6-hydroxy-3-cyclohexene-1-carboxylate (SEPHCHC) and the formation of 2-succinyl-6-hydroxy-2,4-cyclohexadiene-1-carboxylate (SHCHC). The sequence is that of 2-succinyl-6-hydroxy-2,4-cyclohexadiene-1-carboxylate synthase from Yersinia enterocolitica serotype O:8 / biotype 1B (strain NCTC 13174 / 8081).